The following is a 398-amino-acid chain: 1-deoxy-D-xylulose 5-phosphate reductoisomerase (398 aa).

NADPH contacts are provided by Thr10, Gly11, Ser12, Ile13, Lys37, Asn38, and Asn124. Lys125 lines the 1-deoxy-D-xylulose 5-phosphate pocket. Glu126 serves as a coordination point for NADPH. Asp150 provides a ligand contact to Mn(2+). Residues Ser151, Glu152, Ser186, and His209 each coordinate 1-deoxy-D-xylulose 5-phosphate. Mn(2+) is bound at residue Glu152. Residue Gly215 participates in NADPH binding. The 1-deoxy-D-xylulose 5-phosphate site is built by Ser222, Asn227, Lys228, and Glu231. Residue Glu231 coordinates Mn(2+).

This sequence belongs to the DXR family. As to quaternary structure, homodimer. Requires Mg(2+) as cofactor. The cofactor is Mn(2+).

The catalysed reaction is 2-C-methyl-D-erythritol 4-phosphate + NADP(+) = 1-deoxy-D-xylulose 5-phosphate + NADPH + H(+). It functions in the pathway isoprenoid biosynthesis; isopentenyl diphosphate biosynthesis via DXP pathway; isopentenyl diphosphate from 1-deoxy-D-xylulose 5-phosphate: step 1/6. In terms of biological role, catalyzes the NADPH-dependent rearrangement and reduction of 1-deoxy-D-xylulose-5-phosphate (DXP) to 2-C-methyl-D-erythritol 4-phosphate (MEP). This Buchnera aphidicola subsp. Acyrthosiphon pisum (strain APS) (Acyrthosiphon pisum symbiotic bacterium) protein is 1-deoxy-D-xylulose 5-phosphate reductoisomerase.